The chain runs to 149 residues: Calmodulin (149 aa).

The residue at position 2 (Ala-2) is an N-acetylalanine. EF-hand domains are found at residues 8-43, 44-79, 81-116, and 117-149; these read EQIAEFKEAFSLFDKDGDGTITTKELGTVMRSLGQN, PTEAELADMINEVDADGNGTIDFPEFLTMMARKMKD, DSEEEILEAFKVFDKDGNGFISAAELRHIMTNLGEK, and LTDEEVDEMIREADIDGDGQINYEEFVKMMMSK. 14 residues coordinate Ca(2+): Asp-21, Asp-23, Asp-25, Thr-27, Glu-32, Asp-57, Asp-59, Asn-61, Thr-63, Glu-68, Asp-94, Asp-96, Asn-98, and Glu-105. Lys-116 is modified (N6,N6,N6-trimethyllysine). 5 residues coordinate Ca(2+): Asp-130, Asp-132, Asp-134, Gln-136, and Glu-141.

Belongs to the calmodulin family.

In terms of biological role, calmodulin mediates the control of a large number of enzymes, ion channels and other proteins by Ca(2+). Among the enzymes to be stimulated by the calmodulin-Ca(2+) complex are a number of protein kinases and phosphatases. The polypeptide is Calmodulin (cam) (Saccharina japonica (Sweet kelp)).